The following is a 286-amino-acid chain: E3 ubiquitin-protein ligase SINA-like 7 (286 aa).

Residues 51–87 form an RING-type zinc finger; it reads CPICYEAFTIPIFQCDNGHLACSSCCPKLNNKCPACT. Residues 101-285 are SBD; the sequence is VLESILIPCP…MRISVKKLNK (185 aa). Residues 104 to 162 form an SIAH-type zinc finger; that stretch reads SILIPCPNAKLGCKKNVSYGKELTHEKECMFSHCACPALDCNYTSSYKDLYTHYRITHM. The Zn(2+) site is built by Cys109, Cys116, His128, Cys132, Cys139, Cys144, His156, and His161.

Belongs to the SINA (Seven in absentia) family.

It catalyses the reaction S-ubiquitinyl-[E2 ubiquitin-conjugating enzyme]-L-cysteine + [acceptor protein]-L-lysine = [E2 ubiquitin-conjugating enzyme]-L-cysteine + N(6)-ubiquitinyl-[acceptor protein]-L-lysine.. Its pathway is protein modification; protein ubiquitination. Its function is as follows. E3 ubiquitin-protein ligase that mediates ubiquitination and subsequent proteasomal degradation of target proteins. E3 ubiquitin ligases accept ubiquitin from an E2 ubiquitin-conjugating enzyme in the form of a thioester and then directly transfers the ubiquitin to targeted substrates. It probably triggers the ubiquitin-mediated degradation of different substrates. This Arabidopsis thaliana (Mouse-ear cress) protein is E3 ubiquitin-protein ligase SINA-like 7.